The sequence spans 515 residues: Fatty acyl-CoA reductase 1 (515 aa).

Residues 1–465 are Cytoplasmic-facing; the sequence is MVSIPEYYEG…ARKHLNKLRN (465 aa). Positions 451-507 are necessary and sufficient for PEX19-mediated localization into peroxisome membrane; it reads SGLPAARKHLNKLRNIRYGFNTILVILIWRIFIARSQMARNIWYFVVSLCYKFLSYF. A helical membrane pass occupies residues 466–483; sequence IRYGFNTILVILIWRIFI. Topologically, residues 484–515 are peroxisomal; it reads ARSQMARNIWYFVVSLCYKFLSYFRASSTMRY.

This sequence belongs to the fatty acyl-CoA reductase family. Interacts with PEX19; PEX19 mediates the targeting of FAR1 to peroxisomes.

Its subcellular location is the peroxisome membrane. The catalysed reaction is a long-chain fatty acyl-CoA + 2 NADPH + 2 H(+) = a long-chain primary fatty alcohol + 2 NADP(+) + CoA. It carries out the reaction hexadecanoyl-CoA + 2 NADPH + 2 H(+) = hexadecan-1-ol + 2 NADP(+) + CoA. It catalyses the reaction octadecanoyl-CoA + 2 NADPH + 2 H(+) = octadecan-1-ol + 2 NADP(+) + CoA. The enzyme catalyses (9Z)-octadecenoyl-CoA + 2 NADPH + 2 H(+) = (9Z)-octadecen-1-ol + 2 NADP(+) + CoA. The catalysed reaction is (9Z,12Z)-octadecadienoyl-CoA + 2 NADPH + 2 H(+) = (9Z,12Z)-octadecadien-1-ol + 2 NADP(+) + CoA. It carries out the reaction eicosanoyl-CoA + 2 NADPH + 2 H(+) = eicosan-1-ol + 2 NADP(+) + CoA. It catalyses the reaction 16-methylheptadecanoyl-CoA + 2 NADPH + 2 H(+) = 16-methylheptadecan-1-ol + 2 NADP(+) + CoA. The enzyme catalyses 18-methylnonadecanoyl-CoA + 2 NADPH + 2 H(+) = 18-methylnonadecan-1-ol + 2 NADP(+) + CoA. Functionally, catalyzes the reduction of saturated and unsaturated C16 or C18 fatty acyl-CoA to fatty alcohols. It plays an essential role in the production of ether lipids/plasmalogens which synthesis requires fatty alcohols. In parallel, it is also required for wax monoesters production since fatty alcohols also constitute a substrate for their synthesis. Its function is as follows. Catalyzes the reduction of saturated and unsaturated C16 or C18 fatty acyl-CoA to fatty alcohols. It plays an essential role in the production of ether lipids/plasmalogens which synthesis requires fatty alcohols. In parallel, it is also required for wax monoesters production since fatty alcohols also constitute a substrate for their synthesis. The sequence is that of Fatty acyl-CoA reductase 1 from Rattus norvegicus (Rat).